We begin with the raw amino-acid sequence, 352 residues long: Dolichol-phosphate mannosyltransferase (352 aa).

The Cytoplasmic segment spans residues 1–229; it reads MKVSVIIPTY…HIYRLMKWEG (229 aa). Positions 8, 10, 12, 37, 39, 89, 90, 91, 93, 117, 156, 178, 202, and 208 each coordinate GDP-alpha-D-mannose. Mg(2+) contacts are provided by Asp91 and Gln93. Residues Asp91 and Gln93 each contribute to the Mn(2+) site. The chain crosses the membrane as a helical span at residues 230–256; it reads EIDRIVKFSIVGLSGILVNEGFLWLFV. The Extracellular segment spans residues 257-261; sequence NLGIP. Residues 262–286 form a helical membrane-spanning segment; that stretch reads KEIAVIPAVELSILNNFFWNDIWTF. Topologically, residues 287–293 are cytoplasmic; it reads KDIRRGS. Residues 294 to 320 traverse the membrane as a helical segment; the sequence is IFSRLLKFHIAALSGAVVNFIVYWILL. The Extracellular portion of the chain corresponds to 321-325; sequence FLGIH. The chain crosses the membrane as a helical span at residues 326–350; the sequence is YLIANLVGIVLSFGVRYVINRHVTW. Residues 351–352 lie on the Cytoplasmic side of the membrane; it reads AT.

This sequence belongs to the glycosyltransferase 2 family. Mg(2+) is required as a cofactor. The cofactor is Mn(2+). Requires Ca(2+) as cofactor.

Its subcellular location is the cell membrane. It carries out the reaction a di-trans,poly-cis-dolichyl phosphate + GDP-alpha-D-mannose = a di-trans,poly-cis-dolichyl beta-D-mannosyl phosphate + GDP. It participates in protein modification; protein glycosylation. Functionally, transfers mannose from GDP-mannose to dolichol monophosphate to form dolichol phosphate mannose (Dol-P-Man) which is the mannosyl donor in pathways leading to N-glycosylation, glycosyl phosphatidylinositol membrane anchoring, and O-mannosylation of proteins. This chain is Dolichol-phosphate mannosyltransferase, found in Pyrococcus furiosus (strain ATCC 43587 / DSM 3638 / JCM 8422 / Vc1).